The chain runs to 193 residues: Acyl carrier protein phosphodiesterase (193 aa).

It belongs to the AcpH family.

The catalysed reaction is holo-[ACP] + H2O = apo-[ACP] + (R)-4'-phosphopantetheine + H(+). Functionally, converts holo-ACP to apo-ACP by hydrolytic cleavage of the phosphopantetheine prosthetic group from ACP. The chain is Acyl carrier protein phosphodiesterase from Salmonella paratyphi A (strain ATCC 9150 / SARB42).